A 45-amino-acid chain; its full sequence is Cytochrome c6 (45 aa).

Residues Cys-12, Cys-15, and His-16 each coordinate heme c.

This sequence belongs to the cytochrome c family. PetJ subfamily. In terms of assembly, monomer. Binds 1 heme c group covalently per subunit.

It is found in the cellular thylakoid lumen. In terms of biological role, functions as an electron carrier between membrane-bound cytochrome b6-f and photosystem I in oxygenic photosynthesis. The chain is Cytochrome c6 (petJ) from Prochlorothrix hollandica.